The primary structure comprises 1040 residues: Vitamin B12-dependent ribonucleotide reductase (1040 aa).

Residues S169, 213-214, G242, 420-424, and 604-608 each bind substrate; these read AC, NPCSE, and PTGTI. A disulfide bridge links C214 with C433. The active-site Proton acceptor is the N420. The active-site Cysteine radical intermediate is the C422. E424 functions as the Proton acceptor in the catalytic mechanism. Disordered stretches follow at residues 909 to 932 and 969 to 988; these read SAEG…GATA and GSAT…SDGA. Residues 969–979 are compositionally biased toward polar residues; it reads GSATNGHSNGQ.

It belongs to the ribonucleoside diphosphate reductase class-2 family. The cofactor is adenosylcob(III)alamin.

It carries out the reaction a 2'-deoxyribonucleoside 5'-diphosphate + [thioredoxin]-disulfide + H2O = a ribonucleoside 5'-diphosphate + [thioredoxin]-dithiol. Functionally, catalyzes the reduction of ribonucleotides to deoxyribonucleotides. May function to provide a pool of deoxyribonucleotide precursors for DNA repair during oxygen limitation and/or for immediate growth after restoration of oxygen. The chain is Vitamin B12-dependent ribonucleotide reductase (nrdJ) from Rhodopirellula baltica (strain DSM 10527 / NCIMB 13988 / SH1).